A 391-amino-acid chain; its full sequence is MGLNQSTFNPLGFFPSHQLDPLFKANAGSADWDKNPNKDPWPQAHDTAVGAFGPGLVPPHGGLLGWSSQAQGLSVTVPDTPPPPSTNRDKGRKPTPATPPLRDTHPQAMTWNTSSFQSYLQNPKVRGLYFPAGGSTSSIVNPVPTTASTTSSSFSTTGVPVSTMDITSSGFLGPLLALQAVFFLLTKILTMPQSLDSLWTSLNFLGGTPACPGLNSQSPTSSHSPTCCPPTCPGYRWMCLRRSIIFLFILLLCLIFLLVLLDYQGMLPVCPLLPTVTGTTTTTGPCRTCTPIVPGISSYPSCCCTKPTDGNCTCIPIPSSWAFAKFLWDWALARFSWLNSLLPFVQWFAGLSPTVWLLVIWMMWFWGPSLFSILSPFLPLLPLFFWLWAYI.

M1 bears the N-acetylmethionine mark. G2 is lipidated: N-myristoyl glycine; by host. The interval 2 to 108 (GLNQSTFNPL…PPLRDTHPQA (107 aa)) is pre-S1. The segment at 2 to 163 (GLNQSTFNPL…FSTTGVPVST (162 aa)) is pre-S. Topologically, residues 2–170 (GLNQSTFNPL…VSTMDITSSG (169 aa)) are virion surface; in external conformation. Residues 2–242 (GLNQSTFNPL…PGYRWMCLRR (241 aa)) lie on the Intravirion; in internal conformation side of the membrane. The disordered stretch occupies residues 73-107 (LSVTVPDTPPPPSTNRDKGRKPTPATPPLRDTHPQ). The interval 109–163 (MTWNTSSFQSYLQNPKVRGLYFPAGGSTSSIVNPVPTTASTTSSSFSTTGVPVST) is pre-S2. The helical transmembrane segment at 171-191 (FLGPLLALQAVFFLLTKILTM) threads the bilayer. Topologically, residues 192–242 (PQSLDSLWTSLNFLGGTPACPGLNSQSPTSSHSPTCCPPTCPGYRWMCLRR) are intravirion; in external conformation. The chain crosses the membrane as a helical span at residues 243–263 (SIIFLFILLLCLIFLLVLLDY). Over 264 to 339 (QGMLPVCPLL…WALARFSWLN (76 aa)) the chain is Virion surface. N-linked (GlcNAc...) asparagine; by host glycosylation occurs at N311. Residues 340–360 (SLLPFVQWFAGLSPTVWLLVI) form a helical membrane-spanning segment. Residues 361–366 (WMMWFW) lie on the Intravirion side of the membrane. The chain crosses the membrane as a helical span at residues 367–389 (GPSLFSILSPFLPLLPLFFWLWA). The Virion surface segment spans residues 390–391 (YI).

Belongs to the orthohepadnavirus major surface antigen family. In terms of assembly, in its internal form (Li-HBsAg), interacts with the capsid protein and with the isoform S. Interacts with host chaperone CANX. Associates with host chaperone CANX through its pre-S2 N glycan; this association may be essential for isoform M proper secretion. As to quaternary structure, interacts with isoform L. Interacts with the antigens of satellite virus HDV (HDVAgs); this interaction is required for encapsidation of HDV genomic RNA. Post-translationally, isoform M is N-terminally acetylated by host at a ratio of 90%, and N-glycosylated by host at the pre-S2 region. In terms of processing, myristoylated.

It localises to the virion membrane. In terms of biological role, the large envelope protein exists in two topological conformations, one which is termed 'external' or Le-HBsAg and the other 'internal' or Li-HBsAg. In its external conformation the protein attaches the virus to cell receptors and thereby initiating infection. This interaction determines the species specificity and liver tropism. This attachment induces virion internalization predominantly through caveolin-mediated endocytosis. The large envelope protein also assures fusion between virion membrane and endosomal membrane. In its internal conformation the protein plays a role in virion morphogenesis and mediates the contact with the nucleocapsid like a matrix protein. The middle envelope protein plays an important role in the budding of the virion. It is involved in the induction of budding in a nucleocapsid independent way. In this process the majority of envelope proteins bud to form subviral lipoprotein particles of 22 nm of diameter that do not contain a nucleocapsid. This chain is Large envelope protein, found in Woolly monkey hepatitis B virus (isolate Louisville) (WMHBV).